The following is a 427-amino-acid chain: N-formyl-4-amino-5-aminomethyl-2-methylpyrimidine deformylase (427 aa).

His91 provides a ligand contact to Zn(2+). Asp93 is an active-site residue. Asp124 is a Zn(2+) binding site. Residue Glu158 is the Proton acceptor of the active site. Glu159, Asp182, and His396 together coordinate Zn(2+).

It belongs to the peptidase M20A family. Requires Zn(2+) as cofactor. Co(2+) is required as a cofactor.

The enzyme catalyses N-formyl-4-amino-5-aminomethyl-2-methylpyrimidine + H2O = 4-amino-5-aminomethyl-2-methylpyrimidine + formate. Its pathway is cofactor biosynthesis; thiamine diphosphate biosynthesis. Functionally, catalyzes the deformylation of the formylaminopyrimidine N-formyl-4-amino-5-aminomethyl-2-methylpyrimidine (FAMP) to give the corresponding aminopyrimidine. The protein is N-formyl-4-amino-5-aminomethyl-2-methylpyrimidine deformylase of Halalkalibacterium halodurans (strain ATCC BAA-125 / DSM 18197 / FERM 7344 / JCM 9153 / C-125) (Bacillus halodurans).